The primary structure comprises 250 residues: MNSMTSAVPVANSVLVVAPHNGYPVTPGIMSHVPLYPNSQPQVHLVPGNPPSLVSNVNGQPVQKALKEGKTLGAIQIIIGLAHIGLGSIMATVLVGEYLSISFYGGFPFWGGLWFIISGSLSVAAENQPYSYCLLSGSLGLNIVSAICSAVGVILFITDLSIPHPYAYPDYYPYAWGVNPGMAISGVLLVFCLLEFGIACASSHFGCQLVCCQSSNVSVIYPNIYAANPVITPEPVTSPPSYSSEIQANK.

Topologically, residues M1–A74 are cytoplasmic. The helical transmembrane segment at I75–V95 threads the bilayer. Topologically, residues G96 to Y98 are extracellular. Residues L99 to G119 form a helical membrane-spanning segment. Topologically, residues S120–S136 are cytoplasmic. Residues G137 to I157 traverse the membrane as a helical segment. At T158–P180 the chain is on the extracellular side. The helical transmembrane segment at G181 to A201 threads the bilayer. The Cytoplasmic segment spans residues S202 to K250.

It belongs to the MS4A family. As to expression, expressed by hematopoietic tissues and cells lines.

The protein resides in the membrane. May be involved in signal transduction as a component of a multimeric receptor complex. The chain is Membrane-spanning 4-domains subfamily A member 8 (MS4A8) from Homo sapiens (Human).